The following is a 199-amino-acid chain: ATP-dependent Clp protease proteolytic subunit (199 aa).

The active-site Nucleophile is the Ser99. The active site involves His124.

It belongs to the peptidase S14 family. As to quaternary structure, fourteen ClpP subunits assemble into 2 heptameric rings which stack back to back to give a disk-like structure with a central cavity, resembling the structure of eukaryotic proteasomes.

The protein localises to the cytoplasm. The enzyme catalyses Hydrolysis of proteins to small peptides in the presence of ATP and magnesium. alpha-casein is the usual test substrate. In the absence of ATP, only oligopeptides shorter than five residues are hydrolyzed (such as succinyl-Leu-Tyr-|-NHMec, and Leu-Tyr-Leu-|-Tyr-Trp, in which cleavage of the -Tyr-|-Leu- and -Tyr-|-Trp bonds also occurs).. Cleaves peptides in various proteins in a process that requires ATP hydrolysis. Has a chymotrypsin-like activity. Plays a major role in the degradation of misfolded proteins. This is ATP-dependent Clp protease proteolytic subunit from Moorella thermoacetica (strain ATCC 39073 / JCM 9320).